A 274-amino-acid chain; its full sequence is MKLLILTICALHVNQMMALKDCVVVNGKNYGKEVLKDNIHQAYQLSFDPQQNTLFFSYSDEVDSKTVLKMGYLNLATKSFGEISGVKDGMATAVDTTNHIVYLGGKDGIYTYDYATKSAKNIGVTSLSIWQMFYCPIHGLFFTTSDEKPYVFKDGQVNQIVEASSSKTRVMAVGEHHDVFFANSSGIFLFNHHTNKVIDLGDYNVNAFTKDSKGKLYFSSPVGFYAVNEADRKMNKLISETGEDSIWGAAFDKDDNIVYSNEDNIVKLVPKDKC.

Positions 1–18 (MKLLILTICALHVNQMMA) are cleaved as a signal peptide. N183 carries an N-linked (GlcNAc...) asparagine glycan.

Monomer. In terms of tissue distribution, present in larval hemolymph and synthesized by the fat body.

Binds to an ommochrome, ommatin D which is a yellow chromophore. May be involved in guiding the chromophore through the hemolymph from the epidermis to the gut. The protein is Ommochrome-binding protein of Manduca sexta (Tobacco hawkmoth).